Here is a 194-residue protein sequence, read N- to C-terminus: Glycerol-3-phosphate acyltransferase (194 aa).

5 consecutive transmembrane segments (helical) span residues 4–24 (ELILTAVAYIVGSIPTGLLLA), 80–100 (WVAAVGLAAFLGHVYTIFLGF), 112–132 (VFLGVSPLSVLGALALFIGIV), 137–157 (YISLGSIIAAAAMPLFVAAVE), and 161–181 (LLVGMTLVIAVIVIVKHRENI).

Belongs to the PlsY family. As to quaternary structure, probably interacts with PlsX.

Its subcellular location is the cell inner membrane. It carries out the reaction an acyl phosphate + sn-glycerol 3-phosphate = a 1-acyl-sn-glycero-3-phosphate + phosphate. It participates in lipid metabolism; phospholipid metabolism. In terms of biological role, catalyzes the transfer of an acyl group from acyl-phosphate (acyl-PO(4)) to glycerol-3-phosphate (G3P) to form lysophosphatidic acid (LPA). This enzyme utilizes acyl-phosphate as fatty acyl donor, but not acyl-CoA or acyl-ACP. This is Glycerol-3-phosphate acyltransferase from Geobacter sulfurreducens (strain ATCC 51573 / DSM 12127 / PCA).